Consider the following 126-residue polypeptide: Large ribosomal subunit protein bL17 (126 aa).

The protein belongs to the bacterial ribosomal protein bL17 family. As to quaternary structure, part of the 50S ribosomal subunit. Contacts protein L32.

The protein is Large ribosomal subunit protein bL17 of Laribacter hongkongensis (strain HLHK9).